Here is a 112-residue protein sequence, read N- to C-terminus: Pediocin PA-1 immunity protein (112 aa).

Functionally, imparts immunity to pediocin PA-1/ACH to naturally sensitive host strains. The chain is Pediocin PA-1 immunity protein (pedB) from Pediococcus acidilactici.